A 565-amino-acid chain; its full sequence is NAD-dependent malic enzyme (565 aa).

The active-site Proton donor is Tyr-104. Arg-157 provides a ligand contact to NAD(+). Catalysis depends on Lys-175, which acts as the Proton acceptor. The a divalent metal cation site is built by Glu-246, Asp-247, and Asp-270. Positions 270 and 418 each coordinate NAD(+).

Belongs to the malic enzymes family. As to quaternary structure, homotetramer. The cofactor is Mg(2+). Mn(2+) is required as a cofactor.

It catalyses the reaction (S)-malate + NAD(+) = pyruvate + CO2 + NADH. The enzyme catalyses oxaloacetate + H(+) = pyruvate + CO2. This is NAD-dependent malic enzyme from Yersinia enterocolitica serotype O:8 / biotype 1B (strain NCTC 13174 / 8081).